A 489-amino-acid chain; its full sequence is MAAAAVSRTLLPVAGRRLWGFTRRLPLRAAAAQPLYFGGDRLRSTQAAPQVVLNVPETQVTCLENGLRVASENSGISTCTVGLWIDAGSRYENEKNNGTAHFLEHMAFKGTKKRSQLDLELEIENMGAHLNAYTSREQTVYYAKAFSKDLPRAVEILADIIQNSTLGEAEIERERGVILREMQEVETNLQEVVFDYLHATAYQNTALGRTILGPTENIKSISRKDLVDYITTHYKGPRIVLAAAGGVCHNELLELAKFHFGDSLCAHKGDVPALPPCKFTGSEIRVRDDKMPLAHLAVAIEAVGWTHPDTICLMVANTLIGNWDRSFGGGMNLSSKLAQLTCHGNLCHSFQSFNTSYTDTGLWGLYMVCEQATVADMLHAVQKEWMRLCTAVSESEVARAKNLLKTNMLLQLDGSTPICEDIGRQMLCYNRRIPIPELEARIDAVDAEMVREVCTKYIYGKSPAIAALGPIERLPDFNQICSNMRWTRD.

The transit peptide at 1-45 directs the protein to the mitochondrion; sequence MAAAAVSRTLLPVAGRRLWGFTRRLPLRAAAAQPLYFGGDRLRST. His-101 provides a ligand contact to Zn(2+). The active-site Proton acceptor is the Glu-104. Zn(2+) contacts are provided by His-105 and Glu-181.

The protein belongs to the peptidase M16 family. Heterodimer of PMPCA (alpha) and PMPCB (beta) subunits, forming the mitochondrial processing protease (MPP) in which PMPCA is involved in substrate recognition and binding and PMPCB is the catalytic subunit. Zn(2+) is required as a cofactor.

It is found in the mitochondrion matrix. It carries out the reaction Release of N-terminal transit peptides from precursor proteins imported into the mitochondrion, typically with Arg in position P2.. With respect to regulation, binding to PMPCA is required for catalytic activity. Catalytic subunit of the essential mitochondrial processing protease (MPP), which cleaves the mitochondrial sequence off newly imported precursors proteins. Preferentially, cleaves after an arginine at position P2. Required for PINK1 turnover by coupling PINK1 mitochondrial import and cleavage, which results in subsequent PINK1 proteolysis. This chain is Mitochondrial-processing peptidase subunit beta (Pmpcb), found in Rattus norvegicus (Rat).